The sequence spans 201 residues: Peptidyl-tRNA hydrolase (201 aa).

Position 17 (Tyr17) interacts with tRNA. Residue His22 is the Proton acceptor of the active site. The tRNA site is built by Phe76, Asn78, and Asn124.

It belongs to the PTH family. In terms of assembly, monomer.

It is found in the cytoplasm. It carries out the reaction an N-acyl-L-alpha-aminoacyl-tRNA + H2O = an N-acyl-L-amino acid + a tRNA + H(+). Its function is as follows. Hydrolyzes ribosome-free peptidyl-tRNAs (with 1 or more amino acids incorporated), which drop off the ribosome during protein synthesis, or as a result of ribosome stalling. Functionally, catalyzes the release of premature peptidyl moieties from peptidyl-tRNA molecules trapped in stalled 50S ribosomal subunits, and thus maintains levels of free tRNAs and 50S ribosomes. The protein is Peptidyl-tRNA hydrolase of Oleidesulfovibrio alaskensis (strain ATCC BAA-1058 / DSM 17464 / G20) (Desulfovibrio alaskensis).